Reading from the N-terminus, the 591-residue chain is Aspartate--tRNA(Asp/Asn) ligase (591 aa).

An L-aspartate-binding site is contributed by glutamate 170. The segment at 194 to 197 (QLFK) is aspartate. L-aspartate is bound at residue arginine 216. ATP contacts are provided by residues 216–218 (RDE) and glutamine 225. Histidine 448 serves as a coordination point for L-aspartate. An ATP-binding site is contributed by glutamate 482. Arginine 489 serves as a coordination point for L-aspartate. An ATP-binding site is contributed by 534–537 (GWDR). The interval 559 to 591 (GGVDPLTDAPAPITEQQRKESGIDVKPEPSKPH) is disordered. The span at 574–591 (QQRKESGIDVKPEPSKPH) shows a compositional bias: basic and acidic residues.

The protein belongs to the class-II aminoacyl-tRNA synthetase family. Type 1 subfamily. In terms of assembly, homodimer.

It is found in the cytoplasm. It carries out the reaction tRNA(Asx) + L-aspartate + ATP = L-aspartyl-tRNA(Asx) + AMP + diphosphate. Its function is as follows. Aspartyl-tRNA synthetase with relaxed tRNA specificity since it is able to aspartylate not only its cognate tRNA(Asp) but also tRNA(Asn). Reaction proceeds in two steps: L-aspartate is first activated by ATP to form Asp-AMP and then transferred to the acceptor end of tRNA(Asp/Asn). In Mycobacterium avium (strain 104), this protein is Aspartate--tRNA(Asp/Asn) ligase.